Consider the following 644-residue polypeptide: Alkyldihydroxyacetonephosphate synthase, peroxisomal (644 aa).

A peroxisome-targeting transit peptide spans methionine 1–cysteine 44. Positions methionine 1–proline 70 are disordered. Over residues alanine 10–arginine 19 the composition is skewed to basic and acidic residues. Residues alanine 49 to proline 64 show a composition bias toward low complexity. Residues serine 51 and serine 56 each carry the phosphoserine modification. N6-acetyllysine is present on lysine 88. One can recognise an FAD-binding PCMH-type domain in the interval phenylalanine 188–threonine 370. FAD is bound by residues proline 220–serine 226, aspartate 289–isoleucine 295, and threonine 302–serine 305. Lysine 333 is subject to N6-acetyllysine. Glutamate 354–isoleucine 360 contributes to the FAD binding site. Arginine 501 is a substrate binding site. The Proton donor/acceptor role is filled by tyrosine 564. Important for enzyme activity regions lie at residues histidine 601–histidine 603 and asparagine 640–leucine 644.

Belongs to the FAD-binding oxidoreductase/transferase type 4 family. In terms of assembly, homodimer. FAD is required as a cofactor.

It is found in the peroxisome membrane. The protein resides in the peroxisome. The enzyme catalyses a long chain fatty alcohol + a 1-acylglycerone 3-phosphate = a 1-O-alkylglycerone 3-phosphate + a long-chain fatty acid + H(+). The catalysed reaction is hexadecan-1-ol + 1-hexadecanoylglycerone 3-phosphate = 1-O-hexadecylglycerone 3-phosphate + hexadecanoate + H(+). It catalyses the reaction 1-hexadecanoylglycerone 3-phosphate + a long-chain fatty acid = a 1-acylglycerone 3-phosphate + hexadecanoate. It functions in the pathway glycerolipid metabolism; ether lipid biosynthesis. Inhibited by divalent cation Mg(2+). Catalyzes the exchange of the acyl chain in acyl-dihydroxyacetonephosphate (acyl-DHAP) for a long chain fatty alcohol, yielding the first ether linked intermediate, i.e. alkyl-dihydroxyacetonephosphate (alkyl-DHAP), in the pathway of ether lipid biosynthesis. In Rattus norvegicus (Rat), this protein is Alkyldihydroxyacetonephosphate synthase, peroxisomal (Agps).